Here is a 218-residue protein sequence, read N- to C-terminus: Pyridoxine/pyridoxamine 5'-phosphate oxidase (218 aa).

Residues Arg14–Tyr17 and Lys72 each bind substrate. Residues Arg67–Lys72, Tyr82–Thr83, Arg88, Lys89, and Gln111 contribute to the FMN site. Residues Tyr129, Arg133, and Ser137 each contribute to the substrate site. FMN-binding positions include Gln146 to Ser147 and Trp191. Residue Arg197–His199 coordinates substrate. Residue Arg201 participates in FMN binding.

Belongs to the pyridoxamine 5'-phosphate oxidase family. As to quaternary structure, homodimer. The cofactor is FMN.

It catalyses the reaction pyridoxamine 5'-phosphate + O2 + H2O = pyridoxal 5'-phosphate + H2O2 + NH4(+). It carries out the reaction pyridoxine 5'-phosphate + O2 = pyridoxal 5'-phosphate + H2O2. It functions in the pathway cofactor metabolism; pyridoxal 5'-phosphate salvage; pyridoxal 5'-phosphate from pyridoxamine 5'-phosphate: step 1/1. Its pathway is cofactor metabolism; pyridoxal 5'-phosphate salvage; pyridoxal 5'-phosphate from pyridoxine 5'-phosphate: step 1/1. Functionally, catalyzes the oxidation of either pyridoxine 5'-phosphate (PNP) or pyridoxamine 5'-phosphate (PMP) into pyridoxal 5'-phosphate (PLP). The protein is Pyridoxine/pyridoxamine 5'-phosphate oxidase of Escherichia coli (strain SMS-3-5 / SECEC).